The primary structure comprises 177 residues: tRNA (cytidine(56)-2'-O)-methyltransferase (177 aa).

Residues Leu-84 and 109 to 113 each bind S-adenosyl-L-methionine; that span reads GAEKV.

The protein belongs to the aTrm56 family. As to quaternary structure, homodimer.

Its subcellular location is the cytoplasm. The catalysed reaction is cytidine(56) in tRNA + S-adenosyl-L-methionine = 2'-O-methylcytidine(56) in tRNA + S-adenosyl-L-homocysteine + H(+). Its function is as follows. Specifically catalyzes the AdoMet-dependent 2'-O-ribose methylation of cytidine at position 56 in tRNAs. This Methanosarcina barkeri (strain Fusaro / DSM 804) protein is tRNA (cytidine(56)-2'-O)-methyltransferase.